Reading from the N-terminus, the 255-residue chain is Thiazole synthase (255 aa).

Residue K96 is the Schiff-base intermediate with DXP of the active site. 1-deoxy-D-xylulose 5-phosphate contacts are provided by residues G157, 183–184 (AG), and 205–206 (NT).

Belongs to the ThiG family. Homotetramer. Forms heterodimers with either ThiH or ThiS.

Its subcellular location is the cytoplasm. It catalyses the reaction [ThiS sulfur-carrier protein]-C-terminal-Gly-aminoethanethioate + 2-iminoacetate + 1-deoxy-D-xylulose 5-phosphate = [ThiS sulfur-carrier protein]-C-terminal Gly-Gly + 2-[(2R,5Z)-2-carboxy-4-methylthiazol-5(2H)-ylidene]ethyl phosphate + 2 H2O + H(+). Its pathway is cofactor biosynthesis; thiamine diphosphate biosynthesis. Its function is as follows. Catalyzes the rearrangement of 1-deoxy-D-xylulose 5-phosphate (DXP) to produce the thiazole phosphate moiety of thiamine. Sulfur is provided by the thiocarboxylate moiety of the carrier protein ThiS. In vitro, sulfur can be provided by H(2)S. The sequence is that of Thiazole synthase from Geobacillus sp. (strain WCH70).